The primary structure comprises 453 residues: Homogentisate 1,2-dioxygenase (453 aa).

Residue His306 is the Proton acceptor of the active site. Fe cation contacts are provided by His349 and Glu355. Residues Tyr364 and His385 each coordinate homogentisate. Fe cation is bound at residue His385.

Belongs to the homogentisate dioxygenase family. Hexamer; dimer of trimers. Fe cation is required as a cofactor.

It catalyses the reaction homogentisate + O2 = 4-maleylacetoacetate + H(+). The protein operates within amino-acid degradation; L-phenylalanine degradation; acetoacetate and fumarate from L-phenylalanine: step 4/6. Its function is as follows. Involved in the catabolism of homogentisate (2,5-dihydroxyphenylacetate or 2,5-OH-PhAc), a central intermediate in the degradation of phenylalanine and tyrosine. Catalyzes the oxidative ring cleavage of the aromatic ring of homogentisate to yield maleylacetoacetate. The sequence is that of Homogentisate 1,2-dioxygenase from Rhizobium johnstonii (strain DSM 114642 / LMG 32736 / 3841) (Rhizobium leguminosarum bv. viciae).